The primary structure comprises 156 residues: Ribosome maturation factor RimP (156 aa).

This sequence belongs to the RimP family.

Its subcellular location is the cytoplasm. Its function is as follows. Required for maturation of 30S ribosomal subunits. In Dictyoglomus thermophilum (strain ATCC 35947 / DSM 3960 / H-6-12), this protein is Ribosome maturation factor RimP.